The sequence spans 417 residues: NADH-quinone oxidoreductase subunit D (417 aa).

Belongs to the complex I 49 kDa subunit family. NDH-1 is composed of 14 different subunits. Subunits NuoB, C, D, E, F, and G constitute the peripheral sector of the complex.

The protein localises to the cell inner membrane. The enzyme catalyses a quinone + NADH + 5 H(+)(in) = a quinol + NAD(+) + 4 H(+)(out). Functionally, NDH-1 shuttles electrons from NADH, via FMN and iron-sulfur (Fe-S) centers, to quinones in the respiratory chain. The immediate electron acceptor for the enzyme in this species is believed to be ubiquinone. Couples the redox reaction to proton translocation (for every two electrons transferred, four hydrogen ions are translocated across the cytoplasmic membrane), and thus conserves the redox energy in a proton gradient. The sequence is that of NADH-quinone oxidoreductase subunit D from Cupriavidus necator (strain ATCC 17699 / DSM 428 / KCTC 22496 / NCIMB 10442 / H16 / Stanier 337) (Ralstonia eutropha).